A 910-amino-acid polypeptide reads, in one-letter code: Leucine--tRNA ligase (910 aa).

Positions 42-52 match the 'HIGH' region motif; sequence PYPSGKLHMGH. Positions 658-662 match the 'KMSKS' region motif; the sequence is TMSKS. Lys-661 lines the ATP pocket.

It belongs to the class-I aminoacyl-tRNA synthetase family.

The protein resides in the cytoplasm. It carries out the reaction tRNA(Leu) + L-leucine + ATP = L-leucyl-tRNA(Leu) + AMP + diphosphate. The sequence is that of Leucine--tRNA ligase from Acidovorax ebreus (strain TPSY) (Diaphorobacter sp. (strain TPSY)).